The following is a 245-amino-acid chain: 4-hydroxy-tetrahydrodipicolinate reductase (245 aa).

Residues 7-12, 75-77, and 102-105 each bind NAD(+); these read GARGKV, GTT, and APNF. His-132 acts as the Proton donor/acceptor in catalysis. Residue His-133 participates in (S)-2,3,4,5-tetrahydrodipicolinate binding. The Proton donor role is filled by Lys-136. Position 142–143 (142–143) interacts with (S)-2,3,4,5-tetrahydrodipicolinate; sequence GT.

The protein belongs to the DapB family.

It localises to the cytoplasm. The catalysed reaction is (S)-2,3,4,5-tetrahydrodipicolinate + NAD(+) + H2O = (2S,4S)-4-hydroxy-2,3,4,5-tetrahydrodipicolinate + NADH + H(+). It carries out the reaction (S)-2,3,4,5-tetrahydrodipicolinate + NADP(+) + H2O = (2S,4S)-4-hydroxy-2,3,4,5-tetrahydrodipicolinate + NADPH + H(+). It participates in amino-acid biosynthesis; L-lysine biosynthesis via DAP pathway; (S)-tetrahydrodipicolinate from L-aspartate: step 4/4. Catalyzes the conversion of 4-hydroxy-tetrahydrodipicolinate (HTPA) to tetrahydrodipicolinate. The chain is 4-hydroxy-tetrahydrodipicolinate reductase from Mycolicibacterium vanbaalenii (strain DSM 7251 / JCM 13017 / BCRC 16820 / KCTC 9966 / NRRL B-24157 / PYR-1) (Mycobacterium vanbaalenii).